We begin with the raw amino-acid sequence, 551 residues long: uncharacterized protein (551 aa).

The protein belongs to the GSP E family.

This is an uncharacterized protein from Methanocaldococcus jannaschii (strain ATCC 43067 / DSM 2661 / JAL-1 / JCM 10045 / NBRC 100440) (Methanococcus jannaschii).